A 493-amino-acid chain; its full sequence is Aspartyl/glutamyl-tRNA(Asn/Gln) amidotransferase subunit B (493 aa).

The tract at residues 473–493 is disordered; that stretch reads KSGGKANPKQAADLVNKRLTE.

Belongs to the GatB/GatE family. GatB subfamily. In terms of assembly, heterotrimer of A, B and C subunits.

It catalyses the reaction L-glutamyl-tRNA(Gln) + L-glutamine + ATP + H2O = L-glutaminyl-tRNA(Gln) + L-glutamate + ADP + phosphate + H(+). The catalysed reaction is L-aspartyl-tRNA(Asn) + L-glutamine + ATP + H2O = L-asparaginyl-tRNA(Asn) + L-glutamate + ADP + phosphate + 2 H(+). In terms of biological role, allows the formation of correctly charged Asn-tRNA(Asn) or Gln-tRNA(Gln) through the transamidation of misacylated Asp-tRNA(Asn) or Glu-tRNA(Gln) in organisms which lack either or both of asparaginyl-tRNA or glutaminyl-tRNA synthetases. The reaction takes place in the presence of glutamine and ATP through an activated phospho-Asp-tRNA(Asn) or phospho-Glu-tRNA(Gln). This chain is Aspartyl/glutamyl-tRNA(Asn/Gln) amidotransferase subunit B, found in Treponema denticola (strain ATCC 35405 / DSM 14222 / CIP 103919 / JCM 8153 / KCTC 15104).